The sequence spans 146 residues: Hemoglobin subunit beta (146 aa).

The 145-residue stretch at 2–146 (HWSAEEKQLI…VAHALARKYH (145 aa)) folds into the Globin domain. The heme b site is built by His63 and His92.

The protein belongs to the globin family. In terms of assembly, heterotetramer of two alpha chains and two beta chains. As to expression, red blood cells.

Its function is as follows. Involved in oxygen transport from the lung to the various peripheral tissues. The chain is Hemoglobin subunit beta (HBB) from Anser anser anser (Western greylag goose).